A 434-amino-acid chain; its full sequence is Arrestin domain-containing protein 1 (434 aa).

Residues 295–345 (PGPGSSPGLLSPVVPSAPPQEEAEAVASGPHFSDPVSLSTKSHSQQQPLST) form a disordered region. The segment covering 330 to 342 (VSLSTKSHSQQQP) has biased composition (polar residues). Short sequence motifs (PPxY motif) lie at residues 401 to 404 (PPEY) and 414 to 417 (PPSY).

Belongs to the arrestin family. Interacts (via PPxY motifs) with ITCH (via WW domains); the interaction is direct and participates in the recruitment of the ubiquitin-protein ligase ITCH to the NOTCH1 receptor. Interacts with ARRB1 and ARRB2; the interaction is direct. Interacts with TSG101; may recruit TSG101 to the plasma membrane. Interacts (via PPxY motifs) with WWP2 (via WW domains); ubiquitinates ARRDC1. Interacts with SLC11A2; controls the incorporation of SLC11A2 into extracellular vesicles through an ubiquitination-dependent mechanism. Interacts with WWP1 (via WW domains). Interacts with NEDD4 (via WW domains). Interacts with PDCD6IP. Ubiquitinated. Ubiquitination by WWP2; promotes localization to extracellular microvesicles. Ubiquitinated by WWP1.

It localises to the cell membrane. In terms of biological role, functions as an adapter recruiting ubiquitin-protein ligases to their specific substrates. Through an ubiquitination-dependent mechanism plays for instance a role in the incorporation of SLC11A2 into extracellular vesicles. More generally, plays a role in the extracellular transport of proteins between cells through the release in the extracellular space of microvesicles. By participating in the ITCH-mediated ubiquitination and subsequent degradation of NOTCH1, negatively regulates the NOTCH signaling pathway. In Rattus norvegicus (Rat), this protein is Arrestin domain-containing protein 1.